A 307-amino-acid polypeptide reads, in one-letter code: Ribosomal RNA small subunit methyltransferase H (307 aa).

Residues 38-40 (GGH), D58, F82, D99, and Q106 each bind S-adenosyl-L-methionine.

This sequence belongs to the methyltransferase superfamily. RsmH family.

Its subcellular location is the cytoplasm. It carries out the reaction cytidine(1402) in 16S rRNA + S-adenosyl-L-methionine = N(4)-methylcytidine(1402) in 16S rRNA + S-adenosyl-L-homocysteine + H(+). Specifically methylates the N4 position of cytidine in position 1402 (C1402) of 16S rRNA. In Variovorax paradoxus (strain S110), this protein is Ribosomal RNA small subunit methyltransferase H.